The sequence spans 353 residues: MTIAIGKSSKEPKGLFDSMDDWLRRDRFVFVGWSGLLLFPCAYFALGGWFTGTTFVTSWYTHGLASSYLEGCNFLTAAVSTPANSLAHSLLLLWGPEAQGDFTRWCQLGGLWTFVALHGAFGLIGFMLRQFELARSVQLRPYNAIAFSGPIAVFVSVFLIYPLGQSGWFFAPSFGVAAIFRFILFFQGFHNWTLNPFHMMGVAGVLGAALLCAIHGATVENTLFEDGDGANTFRAFNPTQSEETYSMVTANRFWSQIFGVAFSNKRWLHFFMLFVPVTGLWMSAIGVVGLALNLRAYDFVSQEIRAAEDPEFETFYTKNILLNEGIRAWMAAQDQPHENLVFPEEVLPRGNAL.

Threonine 2 is modified (N-acetylthreonine). Threonine 2 carries the post-translational modification Phosphothreonine. The helical transmembrane segment at 41–61 (CAYFALGGWFTGTTFVTSWYT) threads the bilayer. Histidine 118 contacts chlorophyll a. Residues 125 to 141 (GFMLRQFELARSVQLRP) traverse the membrane as a helical segment. The pheophytin a site is built by glutamine 130 and asparagine 143. The chain crosses the membrane as a helical span at residues 153 to 166 (VFVSVFLIYPLGQS). Residue histidine 198 coordinates chlorophyll a. A helical membrane pass occupies residues 208 to 228 (AALLCAIHGATVENTLFEDGD). Positions 215 and 262 each coordinate a plastoquinone. Residue histidine 215 coordinates Fe cation. Histidine 269 contributes to the Fe cation binding site. Residues 279–295 (GLWMSAIGVVGLALNLR) form a helical membrane-spanning segment.

The protein belongs to the reaction center PufL/M/PsbA/D family. In terms of assembly, PSII is composed of 1 copy each of membrane proteins PsbA, PsbB, PsbC, PsbD, PsbE, PsbF, PsbH, PsbI, PsbJ, PsbK, PsbL, PsbM, PsbT, PsbX, PsbY, PsbZ, Psb30/Ycf12, at least 3 peripheral proteins of the oxygen-evolving complex and a large number of cofactors. It forms dimeric complexes. The D1/D2 heterodimer binds P680, chlorophylls that are the primary electron donor of PSII, and subsequent electron acceptors. It shares a non-heme iron and each subunit binds pheophytin, quinone, additional chlorophylls, carotenoids and lipids. There is also a Cl(-1) ion associated with D1 and D2, which is required for oxygen evolution. The PSII complex binds additional chlorophylls, carotenoids and specific lipids. is required as a cofactor. In terms of processing, phosphorylated on threonine residue(s); phosphorylation increases with increasing light levels.

It is found in the plastid. It localises to the chloroplast thylakoid membrane. The enzyme catalyses 2 a plastoquinone + 4 hnu + 2 H2O = 2 a plastoquinol + O2. Functionally, photosystem II (PSII) is a light-driven water:plastoquinone oxidoreductase that uses light energy to abstract electrons from H(2)O, generating O(2) and a proton gradient subsequently used for ATP formation. It consists of a core antenna complex that captures photons, and an electron transfer chain that converts photonic excitation into a charge separation. The D1/D2 (PsbA/PsbD) reaction center heterodimer binds P680, the primary electron donor of PSII as well as several subsequent electron acceptors. D2 is needed for assembly of a stable PSII complex. The polypeptide is Photosystem II D2 protein (Marchantia polymorpha (Common liverwort)).